The sequence spans 327 residues: Aquaporin-1 (327 aa).

The disordered stretch occupies residues 1–34 (MSSNDSNDTDKQHTRLDPTGVDDAYIPPEQPETK). Over 1 to 48 (MSSNDSNDTDKQHTRLDPTGVDDAYIPPEQPETKHHRFKISRDTLRNH) the chain is Cytoplasmic. The chain crosses the membrane as a helical span at residues 49–69 (FIAAVGEFCGTFMFLWCAYVI). The Extracellular portion of the chain corresponds to 70-91 (CNVANHDVALVAAPDGSHPGQL). Residues 92–112 (IMIAIGFGFSVMFSIWCFAGV) form a helical membrane-spanning segment. At 113 to 136 (SGGALNPAVSLSLCLARAVSPTRC) the chain is on the cytoplasmic side. The NPA 1 motif lies at 118 to 120 (NPA). The chain crosses the membrane as a helical span at residues 137-157 (VVMWVSQIVAGMAAGGAASAM). At 158-176 (TPGEVLFANSLGLGCSRTR) the chain is on the extracellular side. Residues 177 to 197 (GLFLEMFGTAILCLTVLMTAV) traverse the membrane as a helical segment. The Cytoplasmic portion of the chain corresponds to 198–203 (EKRETN). The helical transmembrane segment at 204–224 (FMAALPIGISLFIAHVALTAY) threads the bilayer. The Extracellular segment spans residues 225-248 (TGTGVNPARSLGAAVAARYFPHYH). An NPA 2 motif is present at residues 230–232 (NPA). Residues 249–269 (WIYWIGPLLGSILAWSVWQLL) traverse the membrane as a helical segment. At 270-327 (QILDYTTYVTAEKAASTKEKAQKKVKPAVPLLWLKSNFPLLFFISRSLALNVIIFGKN) the chain is on the cytoplasmic side.

It belongs to the MIP/aquaporin (TC 1.A.8) family.

Its subcellular location is the endoplasmic reticulum membrane. It is found in the cell membrane. Functionally, water channel required to facilitate the transport of water across membranes. Involved in sporulation, freeze tolerance and osmotolerance. Is non-functional in most laboratory strains. The sequence is that of Aquaporin-1 (AQY1) from Saccharomyces cerevisiae (Baker's yeast).